Here is a 478-residue protein sequence, read N- to C-terminus: ATP synthase subunit beta (478 aa).

158–165 (GGAGVGKT) provides a ligand contact to ATP.

It belongs to the ATPase alpha/beta chains family. In terms of assembly, F-type ATPases have 2 components, CF(1) - the catalytic core - and CF(0) - the membrane proton channel. CF(1) has five subunits: alpha(3), beta(3), gamma(1), delta(1), epsilon(1). CF(0) has three main subunits: a(1), b(2) and c(9-12). The alpha and beta chains form an alternating ring which encloses part of the gamma chain. CF(1) is attached to CF(0) by a central stalk formed by the gamma and epsilon chains, while a peripheral stalk is formed by the delta and b chains.

Its subcellular location is the cell inner membrane. The enzyme catalyses ATP + H2O + 4 H(+)(in) = ADP + phosphate + 5 H(+)(out). Its function is as follows. Produces ATP from ADP in the presence of a proton gradient across the membrane. The catalytic sites are hosted primarily by the beta subunits. This Rhizobium johnstonii (strain DSM 114642 / LMG 32736 / 3841) (Rhizobium leguminosarum bv. viciae) protein is ATP synthase subunit beta.